A 330-amino-acid polypeptide reads, in one-letter code: 2-methyl-6-phytyl-1,4-hydroquinone methyltransferase 1, chloroplastic (330 aa).

The N-terminal 45 residues, 1-45 (MKEMVSSSTFRAPGGLGFLGPSKIGLIPLRNRSGVRSRVKYIAPK), are a transit peptide targeting the chloroplast. The Chloroplast intermembrane portion of the chain corresponds to 46-295 (CAVSSARPAS…DVEKPVNPFT (250 aa)). Residues 107-116 (VVDVGGGTGF) are SAM motif I. An SAM motif II region spans residues 152-165 (VNIIEGDAEDLPYP). An SAM motif III region spans residues 193–206 (RVLKLGGVACLIGP). Residues 296–316 (FIFRFVMGTICASYYVLVPIY) traverse the membrane as a helical segment. At 317–330 (MWMKDQIVPKDQPI) the chain is on the stromal side.

Belongs to the class I-like SAM-binding methyltransferase superfamily. MPBQ/MBSQ MT family.

Its subcellular location is the plastid. It is found in the chloroplast inner membrane. It catalyses the reaction 2-methyl-6-phytyl-1,4-benzene-1,4-diol + S-adenosyl-L-methionine = 2,3-dimethyl-6-phytylbenzene-1,4-diol + S-adenosyl-L-homocysteine + H(+). The enzyme catalyses 2-methyl-6-(all-trans-nonaprenyl)benzene-1,4-diol + S-adenosyl-L-methionine = plastoquinol-9 + S-adenosyl-L-homocysteine + H(+). It carries out the reaction 6-geranylgeranyl-2-methylbenzene-1,4-diol + S-adenosyl-L-methionine = 6-geranylgeranyl-2,3-dimethylbenzene-1,4-diol + S-adenosyl-L-homocysteine + H(+). The protein operates within cofactor biosynthesis; tocopherol biosynthesis. Involved in a key methylation step in both tocopherols (vitamin E) and plastoquinone synthesis. Catalyzes the conversion of 2-methyl-6-phytyl-1,4-hydroquinone (MPBQ) to 2,3-dimethyl-6-phytyl-1,4-hydroquinone (DMPQ, a substrate for tocopherol cyclase), and 2-methyl-6-solanyl-1,4-benzoquinone (MSBQ) to plastoquinone. In Oryza sativa subsp. japonica (Rice), this protein is 2-methyl-6-phytyl-1,4-hydroquinone methyltransferase 1, chloroplastic (ARSM2).